Here is a 392-residue protein sequence, read N- to C-terminus: Phosphoglycerate kinase (392 aa).

Substrate-binding positions include 21 to 23 (DFN), Arg-36, 59 to 62 (HLGR), Arg-113, and Arg-146. ATP is bound by residues Lys-197, Glu-319, and 345–348 (GGDT).

Belongs to the phosphoglycerate kinase family. Monomer.

The protein resides in the cytoplasm. The catalysed reaction is (2R)-3-phosphoglycerate + ATP = (2R)-3-phospho-glyceroyl phosphate + ADP. It participates in carbohydrate degradation; glycolysis; pyruvate from D-glyceraldehyde 3-phosphate: step 2/5. The chain is Phosphoglycerate kinase from Francisella tularensis subsp. novicida (strain U112).